The chain runs to 499 residues: Na(+)/H(+) antiporter NhaB (499 aa).

The next 12 membrane-spanning stretches (helical) occupy residues 38–58 (VSPF…LAMA), 62–82 (YPLQ…LTSA), 89–109 (VLAN…IYFM), 128–148 (LLLS…LDAL), 149–169 (TVTA…HRFA), 204–224 (LIMH…VGEP), 242–262 (LVMA…CAIL), 310–330 (VLVF…LLII), 349–369 (FEEA…VAVI), 393–413 (MFFV…VATV), 449–469 (ATPN…APLI), and 478–498 (IMAL…VILF).

Belongs to the NhaB Na(+)/H(+) (TC 2.A.34) antiporter family.

It localises to the cell inner membrane. The enzyme catalyses 2 Na(+)(in) + 3 H(+)(out) = 2 Na(+)(out) + 3 H(+)(in). Functionally, na(+)/H(+) antiporter that extrudes sodium in exchange for external protons. This chain is Na(+)/H(+) antiporter NhaB, found in Saccharophagus degradans (strain 2-40 / ATCC 43961 / DSM 17024).